We begin with the raw amino-acid sequence, 137 residues long: MRILGLDIGDRTIGIAISDPLGFTAQGITTIRRKSEAYDLEEIKKICDKYEVDTIVSGLPKNMNGTLGPQSEKVLEFCDLIKEHLNIEIKMWDERLTTVAATRAMLEADLSRSKRKKIVDKVAATYILQGYLDSLSK.

It belongs to the YqgF nuclease family.

Its subcellular location is the cytoplasm. Functionally, could be a nuclease involved in processing of the 5'-end of pre-16S rRNA. The protein is Putative pre-16S rRNA nuclease of Clostridium botulinum (strain 657 / Type Ba4).